A 177-amino-acid polypeptide reads, in one-letter code: ATP synthase subunit delta (177 aa).

It belongs to the ATPase delta chain family. F-type ATPases have 2 components, F(1) - the catalytic core - and F(0) - the membrane proton channel. F(1) has five subunits: alpha(3), beta(3), gamma(1), delta(1), epsilon(1). F(0) has three main subunits: a(1), b(2) and c(10-14). The alpha and beta chains form an alternating ring which encloses part of the gamma chain. F(1) is attached to F(0) by a central stalk formed by the gamma and epsilon chains, while a peripheral stalk is formed by the delta and b chains.

It is found in the cell inner membrane. In terms of biological role, f(1)F(0) ATP synthase produces ATP from ADP in the presence of a proton or sodium gradient. F-type ATPases consist of two structural domains, F(1) containing the extramembraneous catalytic core and F(0) containing the membrane proton channel, linked together by a central stalk and a peripheral stalk. During catalysis, ATP synthesis in the catalytic domain of F(1) is coupled via a rotary mechanism of the central stalk subunits to proton translocation. This protein is part of the stalk that links CF(0) to CF(1). It either transmits conformational changes from CF(0) to CF(1) or is implicated in proton conduction. The protein is ATP synthase subunit delta of Erwinia tasmaniensis (strain DSM 17950 / CFBP 7177 / CIP 109463 / NCPPB 4357 / Et1/99).